Here is a 669-residue protein sequence, read N- to C-terminus: MGIRNIGIMAHIDAGKTTTTERIIYYTGKSHKMGDVDSGNTITDWMPQEQERGITISSAAITCHWKEHQINIIDTPGHVDFTAEVERSLRVLDGGIVIFSAVDGIQAQTETVWKQAEKYEIPRLAYVNKMDRVGANFFKVVEDIENKFKTIPLVLQIPIGNESNFEGVVDIILNKELHFAMENGIPKLTYSQIREEFIEKTALFKKKLIDILSQFSEEITQLFLEDKEISLDVIKSEIRRGTISRFIIPVLMGTSLKNIGIEPLIDSIVDYLPSPFEKSFTAFSLDTNKKILVDPNENKKLSALVFKVQYSSVIAAHLYFVRVYSGEINSNKKIFNASNGKREKFTKIFRVFSNKNEQIDFVKTGDIGAVLGLKFSVTGDTLIEENNNILLESVMFPEPVVLMSVEPERSSDEVRLKEIFEIISKEDPTFSYSESKETGQLIISGMGELHLEIILTRIKDEFNLNVYTGKPQVSYRESAGKIVKEVFEFNNIFAGKNINFKIGMIIKPLSRGEGNKIDFECSIDSTIKSAILRGITTTFVSGAFGYPIIDINVIIFSIVCEISKISESVFESISGFAFHSIFQKSDPIRLEPIMLLEIRTPIEHTGEIISTLNVIGGVIHSVSNIGEYDLIKSEAAFEKLFGYASILRSSTKGRGSFTMEFSYFKEKVS.

Residues 1 to 276 (MGIRNIGIMA…SIVDYLPSPF (276 aa)) form the tr-type G domain. Residues 10–17 (AHIDAGKT), 74–78 (DTPGH), and 128–131 (NKMD) contribute to the GTP site.

The protein belongs to the TRAFAC class translation factor GTPase superfamily. Classic translation factor GTPase family. EF-G/EF-2 subfamily.

The protein resides in the cytoplasm. Catalyzes the GTP-dependent ribosomal translocation step during translation elongation. During this step, the ribosome changes from the pre-translocational (PRE) to the post-translocational (POST) state as the newly formed A-site-bound peptidyl-tRNA and P-site-bound deacylated tRNA move to the P and E sites, respectively. Catalyzes the coordinated movement of the two tRNA molecules, the mRNA and conformational changes in the ribosome. The polypeptide is Elongation factor G 2 (fusA2) (Borreliella afzelii (strain PKo) (Borrelia afzelii)).